The sequence spans 124 residues: Histone H2A (124 aa).

The segment covering 1-18 has biased composition (basic residues); the sequence is MSGRGKSGKARTKAKSRS. A disordered region spans residues 1–21; it reads MSGRGKSGKARTKAKSRSSRA. An N-acetylserine modification is found at S2. S2 carries the phosphoserine modification. Q104 carries the post-translational modification N5-methylglutamine. A Glycyl lysine isopeptide (Lys-Gly) (interchain with G-Cter in ubiquitin) cross-link involves residue K119.

Belongs to the histone H2A family. As to quaternary structure, the nucleosome is a histone octamer containing two molecules each of H2A, H2B, H3 and H4 assembled in one H3-H4 heterotetramer and two H2A-H2B heterodimers. The octamer wraps approximately 147 bp of DNA. In terms of processing, monoubiquitination of Lys-119 gives a specific tag for epigenetic transcriptional repression. Post-translationally, phosphorylation of Ser-2 directly represses transcription.

Its subcellular location is the nucleus. It is found in the chromosome. In terms of biological role, core component of nucleosome. Nucleosomes wrap and compact DNA into chromatin, limiting DNA accessibility to the cellular machineries which require DNA as a template. Histones thereby play a central role in transcription regulation, DNA repair, DNA replication and chromosomal stability. DNA accessibility is regulated via a complex set of post-translational modifications of histones, also called histone code, and nucleosome remodeling. This is Histone H2A from Paracentrotus lividus (Common sea urchin).